We begin with the raw amino-acid sequence, 146 residues long: Ribonuclease H (146 aa).

Residues 1-143 form the RNase H type-1 domain; that stretch reads MKKRVTIYTD…CDELARQAIK (143 aa). Residues Asp-10, Glu-48, Asp-70, and Asp-135 each contribute to the Mg(2+) site.

It belongs to the RNase H family. As to quaternary structure, monomer. The cofactor is Mg(2+).

The protein resides in the cytoplasm. The catalysed reaction is Endonucleolytic cleavage to 5'-phosphomonoester.. In terms of biological role, endonuclease that specifically degrades the RNA of RNA-DNA hybrids. The sequence is that of Ribonuclease H from Chlorobium limicola (strain DSM 245 / NBRC 103803 / 6330).